The sequence spans 404 residues: Argininosuccinate synthase (404 aa).

ATP-binding positions include 10–18 and A38; that span reads AYSGGVDTS. Y89 serves as a coordination point for L-citrulline. G119 is an ATP binding site. Positions 121, 125, and 126 each coordinate L-aspartate. N125 contributes to the L-citrulline binding site. The L-citrulline site is built by R129, S177, S186, E262, and Y274.

Belongs to the argininosuccinate synthase family. Type 1 subfamily. In terms of assembly, homotetramer.

The protein resides in the cytoplasm. It carries out the reaction L-citrulline + L-aspartate + ATP = 2-(N(omega)-L-arginino)succinate + AMP + diphosphate + H(+). The protein operates within amino-acid biosynthesis; L-arginine biosynthesis; L-arginine from L-ornithine and carbamoyl phosphate: step 2/3. This Prochlorococcus marinus subsp. pastoris (strain CCMP1986 / NIES-2087 / MED4) protein is Argininosuccinate synthase.